A 222-amino-acid polypeptide reads, in one-letter code: Glutathione S-transferase alpha-1 (222 aa).

Residue Met1 is modified to N-acetylmethionine. The GST N-terminal domain maps to 3–83 (GKPVLHYFNA…YIATKYDLYG (81 aa)). Lys4 bears the N6-succinyllysine mark. Glutathione-binding positions include Tyr9, Lys45, 54–55 (QV), and 67–68 (QT). A GST C-terminal domain is found at 85–208 (DMKERALIDM…QPGSQRKLPV (124 aa)).

Belongs to the GST superfamily. Alpha family. As to quaternary structure, homodimer. Homodimer or heterodimer of GSTA1 and GSTA2.

It is found in the cytoplasm. The catalysed reaction is RX + glutathione = an S-substituted glutathione + a halide anion + H(+). It carries out the reaction prostaglandin A2 + glutathione = prostaglandin A2-S-(R)-glutathione. The enzyme catalyses prostaglandin J2 + glutathione = prostaglandin J2-S-(R)-glutathione. It catalyses the reaction (13S)-hydroperoxy-(9Z,11E)-octadecadienoate + 2 glutathione = (13S)-hydroxy-(9Z,11E)-octadecadienoate + glutathione disulfide + H2O. The catalysed reaction is androst-5-ene-3,17-dione = androst-4-ene-3,17-dione. Glutathione S-transferase that catalyzes the nucleophilic attack of the sulfur atom of glutathione on the electrophilic groups of a wide range of exogenous and endogenous compounds. Involved in the formation of glutathione conjugates of both prostaglandin A2 (PGA2) and prostaglandin J2 (PGJ2). It also catalyzes the isomerization of D5-androstene-3,17-dione (AD) into D4-androstene-3,17-dione and may therefore play an important role in hormone biosynthesis. Through its glutathione-dependent peroxidase activity toward the fatty acid hydroperoxide (13S)-hydroperoxy-(9Z,11E)-octadecadienoate/13-HPODE it is also involved in the metabolism of oxidized linoleic acid. In Rattus norvegicus (Rat), this protein is Glutathione S-transferase alpha-1 (Gsta1).